The primary structure comprises 209 residues: MTKLLMINAHPHTTVPSASLTVAASFKTAYQQTHPHDEITTRDLYQDGVPALNDTTFEAWRKRKYGEELTSVEAELLSRHASWLAEFLAADKIVFVNPMYNHFLPAELKQYLDLTAVARKTFKYTVNGPVGLLPDKHVLHIQAAGGYYHQPDQHNQVEAGDPYLRGMMQLYGIQDYRTIFIEGLDQFPEQREQAITAAQVAAEKLAGEF.

Residue 17-19 (SAS) coordinates FMN.

Belongs to the azoreductase type 1 family. As to quaternary structure, homodimer. FMN is required as a cofactor.

It catalyses the reaction 2 a quinone + NADH + H(+) = 2 a 1,4-benzosemiquinone + NAD(+). The enzyme catalyses N,N-dimethyl-1,4-phenylenediamine + anthranilate + 2 NAD(+) = 2-(4-dimethylaminophenyl)diazenylbenzoate + 2 NADH + 2 H(+). In terms of biological role, quinone reductase that provides resistance to thiol-specific stress caused by electrophilic quinones. Functionally, also exhibits azoreductase activity. Catalyzes the reductive cleavage of the azo bond in aromatic azo compounds to the corresponding amines. The chain is FMN-dependent NADH:quinone oxidoreductase 2 from Lactiplantibacillus plantarum (strain ATCC BAA-793 / NCIMB 8826 / WCFS1) (Lactobacillus plantarum).